The chain runs to 369 residues: IST1-like protein (369 aa).

Residues 12–59 (KLKVQLKLAVSRIQILKNKKANIVRDEKRNVAELLRKKNEESARIRVE) adopt a coiled-coil conformation. The disordered stretch occupies residues 224–354 (QIIQQQQQPQ…SSDTGYPDYD (131 aa)). Low complexity-rich tracts occupy residues 225 to 239 (IIQQQQQPQMPSFPI) and 246 to 270 (PTFSQIQHQQQIQQQYQQQQQSPQF). Residues 277–305 (FYNNNSGNQTPQFPTISTNNSDGYSNDKF) show a composition bias toward polar residues. The segment covering 306 to 337 (NNGNNNYNNNNNNNNNNNNNNNHNNNNNNNNN) has biased composition (low complexity).

The protein belongs to the IST1 family.

This Dictyostelium discoideum (Social amoeba) protein is IST1-like protein.